The chain runs to 313 residues: Ornithine carbamoyltransferase (313 aa).

Residues 57 to 60 (STRT), Gln84, Arg108, and 135 to 138 (HPCQ) each bind carbamoyl phosphate. Residues Asn166, Asp230, and 234-235 (SM) contribute to the L-ornithine site. Residues 270-271 (CL) and Arg298 each bind carbamoyl phosphate.

The protein belongs to the aspartate/ornithine carbamoyltransferase superfamily. OTCase family. As to quaternary structure, homohexamer.

Its subcellular location is the cytoplasm. The catalysed reaction is carbamoyl phosphate + L-ornithine = L-citrulline + phosphate + H(+). It participates in amino-acid biosynthesis; L-arginine biosynthesis; L-arginine from L-ornithine and carbamoyl phosphate: step 1/3. Functionally, reversibly catalyzes the transfer of the carbamoyl group from carbamoyl phosphate (CP) to the N(epsilon) atom of ornithine (ORN) to produce L-citrulline. The protein is Ornithine carbamoyltransferase of Gloeobacter violaceus (strain ATCC 29082 / PCC 7421).